Consider the following 369-residue polypeptide: Pyrimidine monooxygenase RutA (369 aa).

Residues 49-50 (IK), Asn-115, Glu-124, 140-141 (RY), and Ser-190 contribute to the FMN site.

The protein belongs to the NtaA/SnaA/DszA monooxygenase family. RutA subfamily.

It catalyses the reaction uracil + FMNH2 + NADH + O2 = (Z)-3-ureidoacrylate + FMN + NAD(+) + H2O + H(+). The enzyme catalyses thymine + FMNH2 + NADH + O2 = (Z)-2-methylureidoacrylate + FMN + NAD(+) + H2O + H(+). Functionally, catalyzes the pyrimidine ring opening between N-3 and C-4 by an unusual flavin hydroperoxide-catalyzed mechanism, adding oxygen atoms in the process to yield ureidoacrylate peracid, that immediately reacts with FMN forming ureidoacrylate and FMN-N(5)-oxide. The FMN-N(5)-oxide reacts spontaneously with NADH to produce FMN. Requires the flavin reductase RutF to regenerate FMN in vivo. This Acinetobacter baylyi (strain ATCC 33305 / BD413 / ADP1) protein is Pyrimidine monooxygenase RutA.